The sequence spans 297 residues: Formamidopyrimidine-DNA glycosylase (297 aa).

The active-site Schiff-base intermediate with DNA is Pro2. Glu3 (proton donor) is an active-site residue. Lys58 (proton donor; for beta-elimination activity) is an active-site residue. Residues His106, Arg133, and Arg178 each coordinate DNA. An FPG-type zinc finger spans residues 263–297; it reads FVYDRAGEPCRICGTPIRQILQGQRSTFYCPHCQH. Arg287 serves as the catalytic Proton donor; for delta-elimination activity.

This sequence belongs to the FPG family. Monomer. Zn(2+) serves as cofactor.

It carries out the reaction Hydrolysis of DNA containing ring-opened 7-methylguanine residues, releasing 2,6-diamino-4-hydroxy-5-(N-methyl)formamidopyrimidine.. It catalyses the reaction 2'-deoxyribonucleotide-(2'-deoxyribose 5'-phosphate)-2'-deoxyribonucleotide-DNA = a 3'-end 2'-deoxyribonucleotide-(2,3-dehydro-2,3-deoxyribose 5'-phosphate)-DNA + a 5'-end 5'-phospho-2'-deoxyribonucleoside-DNA + H(+). Its function is as follows. Involved in base excision repair of DNA damaged by oxidation or by mutagenic agents. Acts as a DNA glycosylase that recognizes and removes damaged bases. Has a preference for oxidized purines, such as 7,8-dihydro-8-oxoguanine (8-oxoG). Has AP (apurinic/apyrimidinic) lyase activity and introduces nicks in the DNA strand. Cleaves the DNA backbone by beta-delta elimination to generate a single-strand break at the site of the removed base with both 3'- and 5'-phosphates. The polypeptide is Formamidopyrimidine-DNA glycosylase (Cupriavidus metallidurans (strain ATCC 43123 / DSM 2839 / NBRC 102507 / CH34) (Ralstonia metallidurans)).